The sequence spans 263 residues: tRNA (guanine-N(1)-)-methyltransferase (263 aa).

S-adenosyl-L-methionine is bound by residues Gly124 and 144–149; that span reads LGDFVL.

The protein belongs to the RNA methyltransferase TrmD family. In terms of assembly, homodimer.

Its subcellular location is the cytoplasm. It carries out the reaction guanosine(37) in tRNA + S-adenosyl-L-methionine = N(1)-methylguanosine(37) in tRNA + S-adenosyl-L-homocysteine + H(+). In terms of biological role, specifically methylates guanosine-37 in various tRNAs. The polypeptide is tRNA (guanine-N(1)-)-methyltransferase (Aromatoleum aromaticum (strain DSM 19018 / LMG 30748 / EbN1) (Azoarcus sp. (strain EbN1))).